Here is a 668-residue protein sequence, read N- to C-terminus: RING finger protein 214 (668 aa).

Disordered regions lie at residues M1 to E87 and N103 to R125. A2 bears the N-acetylalanine mark. Phosphoserine occurs at positions 15, 40, 48, and 54. Residues K43–K59 show a composition bias toward polar residues. Basic and acidic residues predominate over residues E60–E71. At S196 the chain carries Phosphoserine. Residues Q220 to T379 adopt a coiled-coil conformation. Positions F486–V552 are disordered. Residues S497, S511, and S516 each carry the phosphoserine modification. Over residues P523–G536 the composition is skewed to pro residues. Residues C623–P665 form an RING-type; atypical zinc finger.

The polypeptide is RING finger protein 214 (Rnf214) (Mus musculus (Mouse)).